Reading from the N-terminus, the 284-residue chain is Ribosome-associated protein oga1 (284 aa).

The segment at 1–284 (MSVASKNLFD…LSETDFPALA (284 aa)) is disordered. Basic and acidic residues predominate over residues 22–36 (TEKKTAASRDKKRSD). 2 positions are modified to phosphoserine: Ser-37 and Ser-51. 2 stretches are compositionally biased toward basic and acidic residues: residues 52 to 73 (RKRDPNQPTPRERTVNKKADQP) and 119 to 141 (GREFDRHSQTGRVDTKKATERGW). Thr-160 is modified (phosphothreonine). Residue Ser-162 is modified to Phosphoserine. Thr-166 carries the post-translational modification Phosphothreonine. Basic and acidic residues-rich tracts occupy residues 172-186 (ENVKTLDEYLSERKS) and 194-209 (TVEKLENATKVEKSAP). A compositionally biased stretch (low complexity) spans 214 to 224 (ASLKKSASQKK). Basic and acidic residues predominate over residues 226–237 (AAKESKPKKVLL). The span at 245–254 (ARPARGGRPN) shows a compositional bias: low complexity. Over residues 263–277 (ETASKTQQAPPTLSE) the composition is skewed to polar residues.

This sequence belongs to the STM1 family. In terms of assembly, associates with mature 80S ribosomes. Binds to the head domain of the 40S ribosomal subunit and prevents mRNA binding by inserting its alpha-helix domain towards the mRNA entry tunnel at the decoding site, where it blocks the binding of tRNA and mRNA at the A- and P-sites. Interacts with eEF2; interaction sequesters eEF2 at the A-site of the ribosome, thereby blocking the interaction sites of the mRNA-tRNA complex, promoting ribosome stabilization and hibernation. Interacts with sad1. Phosphorylation by TORC1 upon nutrient replenishment inhibits STM1 and causes its release from dormant ribosomes.

It is found in the cytoplasm. In terms of biological role, ribosome preservation factor that protect a small pool of nontranslating, vacant ribosomes in cells under nutrient starvation conditions. Under nutrient-limiting conditions, cells reduce ribosome biogenesis and degrade ribosomes via autophagy (ribophagy) or proteasomal degradation. To avoid excessive degradation during starvation, STM1 binds to and protects 80S ribosomes from proteasomal degradation. Under nutrient-sufficient conditions, TORC1 phosphorylates and inhibits STM1 to prevent formation of dormant 80S ribosomes. Acts as an inhibitor of mRNA translation by promoting ribosome hibernation: clamps the two ribosomal subunits, thereby preventing their dissociation, and inhibits translation by excluding mRNA-binding. Acts via its association with eEF2, promoting ribosome stabilization and storage in an inactive state. May also repress translation by preventing association of eEF3 with ribosomes. Binds specifically G4 quadruplex (these are four-stranded right-handed helices, stabilized by guanine base quartets) and purine motif triplex (characterized by a third, antiparallel purine-rich DNA strand located within the major groove of a homopurine stretch of duplex DNA) nucleic acid structures. These structures may be present at telomeres or in rRNAs. Extends chronological lifespan when overexpressed. The polypeptide is Ribosome-associated protein oga1 (Schizosaccharomyces pombe (strain 972 / ATCC 24843) (Fission yeast)).